Reading from the N-terminus, the 314-residue chain is 4-hydroxy-3-methylbut-2-enyl diphosphate reductase (314 aa).

Cys-12 is a [4Fe-4S] cluster binding site. Residues His-41 and His-74 each coordinate (2E)-4-hydroxy-3-methylbut-2-enyl diphosphate. The dimethylallyl diphosphate site is built by His-41 and His-74. His-41 and His-74 together coordinate isopentenyl diphosphate. Cys-96 lines the [4Fe-4S] cluster pocket. His-124 serves as a coordination point for (2E)-4-hydroxy-3-methylbut-2-enyl diphosphate. Position 124 (His-124) interacts with dimethylallyl diphosphate. Residue His-124 coordinates isopentenyl diphosphate. Catalysis depends on Glu-126, which acts as the Proton donor. A (2E)-4-hydroxy-3-methylbut-2-enyl diphosphate-binding site is contributed by Thr-167. Cys-197 provides a ligand contact to [4Fe-4S] cluster. (2E)-4-hydroxy-3-methylbut-2-enyl diphosphate contacts are provided by Ser-225, Ser-226, Asn-227, and Ser-269. Dimethylallyl diphosphate is bound by residues Ser-225, Ser-226, Asn-227, and Ser-269. 4 residues coordinate isopentenyl diphosphate: Ser-225, Ser-226, Asn-227, and Ser-269.

The protein belongs to the IspH family. It depends on [4Fe-4S] cluster as a cofactor.

The enzyme catalyses isopentenyl diphosphate + 2 oxidized [2Fe-2S]-[ferredoxin] + H2O = (2E)-4-hydroxy-3-methylbut-2-enyl diphosphate + 2 reduced [2Fe-2S]-[ferredoxin] + 2 H(+). The catalysed reaction is dimethylallyl diphosphate + 2 oxidized [2Fe-2S]-[ferredoxin] + H2O = (2E)-4-hydroxy-3-methylbut-2-enyl diphosphate + 2 reduced [2Fe-2S]-[ferredoxin] + 2 H(+). The protein operates within isoprenoid biosynthesis; dimethylallyl diphosphate biosynthesis; dimethylallyl diphosphate from (2E)-4-hydroxy-3-methylbutenyl diphosphate: step 1/1. It participates in isoprenoid biosynthesis; isopentenyl diphosphate biosynthesis via DXP pathway; isopentenyl diphosphate from 1-deoxy-D-xylulose 5-phosphate: step 6/6. Catalyzes the conversion of 1-hydroxy-2-methyl-2-(E)-butenyl 4-diphosphate (HMBPP) into a mixture of isopentenyl diphosphate (IPP) and dimethylallyl diphosphate (DMAPP). Acts in the terminal step of the DOXP/MEP pathway for isoprenoid precursor biosynthesis. In Aliivibrio fischeri (strain ATCC 700601 / ES114) (Vibrio fischeri), this protein is 4-hydroxy-3-methylbut-2-enyl diphosphate reductase.